The primary structure comprises 362 residues: Vignain (362 aa).

Positions 1 to 20 (MAMKKLLWVVLSLSLVLGVA) are cleaved as a signal peptide. Residues 21–126 (NSFDFHEKDL…SGTFMYEKVG (106 aa)) constitute a propeptide, activation peptide. 3 disulfide bridges follow: cysteine 149–cysteine 191, cysteine 183–cysteine 224, and cysteine 282–cysteine 334. Cysteine 152 is an active-site residue. Active-site residues include histidine 288 and asparagine 309. N-linked (GlcNAc...) asparagine glycans are attached at residues asparagine 326 and asparagine 346. A propeptide spans 353–362 (GSLSSPKDEL) (removed in mature form). The Prevents secretion from ER signature appears at 359–362 (KDEL).

It belongs to the peptidase C1 family. Post-translationally, the mature protein is not glycosylated. The precursor stored in the endoplasmic reticulum lumen is processed during the transport to proteins bodies to two dominant mature forms that differ by a single amino acid residue at the N-terminus.

The protein resides in the endoplasmic reticulum lumen. Its subcellular location is the vacuole. It localises to the aleurone grain. In terms of biological role, thought to be involved in the hydrolysis of stored seed proteins. In vitro, catalyzes the hydrolysis of proteins, such as azocasein. Shows a preferential cleavage for Asn-|-Xaa in small molecule substrates such as Boc-Asn-|-OPHNO(2). This chain is Vignain, found in Vigna mungo (Black gram).